A 585-amino-acid polypeptide reads, in one-letter code: Isocitrate dehydrogenase kinase/phosphatase (585 aa).

ATP-binding positions include 315-321 and lysine 336; that span reads APGVKGM. Residue aspartate 371 is part of the active site.

This sequence belongs to the AceK family.

Its subcellular location is the cytoplasm. It carries out the reaction L-seryl-[isocitrate dehydrogenase] + ATP = O-phospho-L-seryl-[isocitrate dehydrogenase] + ADP + H(+). Its function is as follows. Bifunctional enzyme which can phosphorylate or dephosphorylate isocitrate dehydrogenase (IDH) on a specific serine residue. This is a regulatory mechanism which enables bacteria to bypass the Krebs cycle via the glyoxylate shunt in response to the source of carbon. When bacteria are grown on glucose, IDH is fully active and unphosphorylated, but when grown on acetate or ethanol, the activity of IDH declines drastically concomitant with its phosphorylation. The sequence is that of Isocitrate dehydrogenase kinase/phosphatase from Photorhabdus laumondii subsp. laumondii (strain DSM 15139 / CIP 105565 / TT01) (Photorhabdus luminescens subsp. laumondii).